A 447-amino-acid chain; its full sequence is UPF0210 protein LSL_0162 (447 aa).

This sequence belongs to the UPF0210 family. In terms of assembly, homodimer.

The sequence is that of UPF0210 protein LSL_0162 from Ligilactobacillus salivarius (strain UCC118) (Lactobacillus salivarius).